A 206-amino-acid polypeptide reads, in one-letter code: tRNA(Phe) 7-((3-amino-3-carboxypropyl)-4-demethylwyosine(37)-N(4))-methyltransferase 2 (206 aa).

It belongs to the TYW3 family.

It carries out the reaction 4-demethyl-7-[(3S)-3-amino-3-carboxypropyl]wyosine(37) in tRNA(Phe) + S-adenosyl-L-methionine = 7-[(3S)-3-amino-3-carboxypropyl]wyosine(37) in tRNA(Phe) + S-adenosyl-L-homocysteine + H(+). Functionally, S-adenosyl-L-methionine-dependent methyltransferase that acts as a component of the wyosine derivatives biosynthesis pathway. Probably methylates N-4 position of wybutosine-86 to produce wybutosine-72. The protein is tRNA(Phe) 7-((3-amino-3-carboxypropyl)-4-demethylwyosine(37)-N(4))-methyltransferase 2 of Pyrococcus furiosus (strain ATCC 43587 / DSM 3638 / JCM 8422 / Vc1).